A 275-amino-acid polypeptide reads, in one-letter code: DNA repair protein RecO (275 aa).

Residues 1-38 form a disordered region; that stretch reads MTDEADADPQPFAAPPATGAPAADKPARKPRRAAPRTS. A compositionally biased stretch (low complexity) spans 8–24; sequence DPQPFAAPPATGAPAAD.

The protein belongs to the RecO family.

Functionally, involved in DNA repair and RecF pathway recombination. In Burkholderia pseudomallei (strain 1710b), this protein is DNA repair protein RecO.